Here is a 354-residue protein sequence, read N- to C-terminus: Malate dehydrogenase 2, peroxisomal (354 aa).

A peroxisomal targeting signal PTS2 region spans residues 10-18 (RIARISAHL). NAD(+) is bound by residues 49–55 (GAAGGIG) and aspartate 75. Arginine 122 and arginine 128 together coordinate substrate. NAD(+) is bound by residues asparagine 135 and 158–160 (ISN). Residues asparagine 160 and arginine 194 each contribute to the substrate site. Histidine 218 serves as the catalytic Proton acceptor. Methionine 269 serves as a coordination point for NAD(+).

Belongs to the LDH/MDH superfamily. MDH type 1 family. In terms of assembly, homodimer. In terms of tissue distribution, expressed in rosette leaves.

It is found in the peroxisome. The enzyme catalyses (S)-malate + NAD(+) = oxaloacetate + NADH + H(+). Catalyzes a reversible NAD-dependent dehydrogenase reaction involved in central metabolism and redox homeostasis between organelle compartments. Peroxisomal NAD-dependent malate dehydrogenase involved in fatty acid beta-oxidation. Reoxidizes NADH from the beta-oxidation and provides NAD for the conversion of fatty acyl-CoA to acetyl-CoA. Does not participate directly in the glyoxylate cycle. Required for maintenance of photosynthetic rates under photorespiratory conditions, and carbon flow during photorespiration. Supplies NADH reductant to the peroxisomal hydroxypyruvate reductase (HPR), which reduces hydroxypyruvate into glycerate in the photorespiratory cycle. In Arabidopsis thaliana (Mouse-ear cress), this protein is Malate dehydrogenase 2, peroxisomal.